The following is a 422-amino-acid chain: Serine--tRNA ligase (422 aa).

The segment at 1–20 (MHDLKSIRDNPDGFDAGLKR) is disordered. Residue 229-231 (TAE) participates in L-serine binding. 260 to 262 (RSE) contributes to the ATP binding site. Glutamate 283 serves as a coordination point for L-serine. Residue 347 to 350 (EISS) coordinates ATP. Serine 383 lines the L-serine pocket.

The protein belongs to the class-II aminoacyl-tRNA synthetase family. Type-1 seryl-tRNA synthetase subfamily. In terms of assembly, homodimer. The tRNA molecule binds across the dimer.

It localises to the cytoplasm. It catalyses the reaction tRNA(Ser) + L-serine + ATP = L-seryl-tRNA(Ser) + AMP + diphosphate + H(+). The catalysed reaction is tRNA(Sec) + L-serine + ATP = L-seryl-tRNA(Sec) + AMP + diphosphate + H(+). It functions in the pathway aminoacyl-tRNA biosynthesis; selenocysteinyl-tRNA(Sec) biosynthesis; L-seryl-tRNA(Sec) from L-serine and tRNA(Sec): step 1/1. Its function is as follows. Catalyzes the attachment of serine to tRNA(Ser). Is also able to aminoacylate tRNA(Sec) with serine, to form the misacylated tRNA L-seryl-tRNA(Sec), which will be further converted into selenocysteinyl-tRNA(Sec). The chain is Serine--tRNA ligase from Paramagnetospirillum magneticum (strain ATCC 700264 / AMB-1) (Magnetospirillum magneticum).